Consider the following 316-residue polypeptide: Serpentine receptor class delta-48 (316 aa).

Transmembrane regions (helical) follow at residues 8–28 (FFYI…IFVI), 42–62 (FLLC…LLQL), 89–109 (LFYV…FITI), 127–147 (VVII…QIDL), 185–205 (FLLT…GFFI), 236–256 (TLQS…YFVV), and 269–289 (ILPV…LYSV).

Belongs to the nematode receptor-like protein srd family.

The protein localises to the membrane. The protein is Serpentine receptor class delta-48 (srd-48) of Caenorhabditis elegans.